The following is a 740-amino-acid chain: Catalase-peroxidase (740 aa).

The tryptophyl-tyrosyl-methioninium (Trp-Tyr) (with M-255) cross-link spans W107–Y229. H108 acts as the Proton acceptor in catalysis. A cross-link (tryptophyl-tyrosyl-methioninium (Tyr-Met) (with W-107)) is located at residues Y229–M255. A heme b-binding site is contributed by H270. W321 acts as the Tryptophan radical intermediate in catalysis.

Belongs to the peroxidase family. Peroxidase/catalase subfamily. In terms of assembly, homodimer. Heme b serves as cofactor. Post-translationally, formation of the three residue Trp-Tyr-Met cross-link is important for the catalase, but not the peroxidase activity of the enzyme.

The catalysed reaction is H2O2 + AH2 = A + 2 H2O. It carries out the reaction 2 H2O2 = O2 + 2 H2O. Bifunctional enzyme with both catalase and broad-spectrum peroxidase activity, oxidizing various electron donors including NADP(H). Protects M.tuberculosis against toxic reactive oxygen species (ROS) including hydrogen peroxide as well as organic peroxides and thus contributes to its survival within host macrophages by countering the phagocyte oxidative burst. Also displays efficient peroxynitritase activity, which may help the bacterium to persist in macrophages. In terms of biological role, catalyzes the oxidative activation of the antitubercular pro-drug isoniazid (INH) to generate an isonicotinoyl radical that then reacts nonenzymatically with NAD to form an isonicotinoyl-NAD adduct which inhibits InhA. The polypeptide is Catalase-peroxidase (Mycobacterium tuberculosis (strain CDC 1551 / Oshkosh)).